Consider the following 186-residue polypeptide: PRKR-interacting protein 1 (186 aa).

An interaction with EIF2AK2 region spans residues 1-50 (MASPAAASVRPPRPKKEPQTLVIPKNAAEEQKLKLERLMKNPDKAVPIPE). The tract at residues 51–143 (KMNEWAPRAP…LKEKKLLAKK (93 aa)) is required for RNA-binding. Residues 91–178 (QRQDYMDAMA…ASETEEEEEE (88 aa)) adopt a coiled-coil conformation. Basic and acidic residues predominate over residues 116 to 125 (NKIAAEEQTA). Residues 116-186 (NKIAAEEQTA…EEPSVVIMGR (71 aa)) are disordered. The tract at residues 126-138 (KRRKKRQKLKEKK) is required for nuclear localization. Basic residues predominate over residues 126-143 (KRRKKRQKLKEKKLLAKK). Over residues 144–155 (MKLEQKKQKEEP) the composition is skewed to basic and acidic residues. Residues 168 to 179 (EASETEEEEEEP) are compositionally biased toward acidic residues.

It belongs to the PRKRIP1 family. Component of the pre-catalytic and post-catalytic spliceosome complexes. Interacts with EIF2AK2. Broadly expressed, with highest levels in liver, kidney, brain and heart.

It localises to the nucleus. The protein localises to the nucleolus. Its function is as follows. Required for pre-mRNA splicing as component of the spliceosome. Binds double-stranded RNA. Inhibits EIF2AK2 kinase activity. The sequence is that of PRKR-interacting protein 1 (Prkrip1) from Mus musculus (Mouse).